A 483-amino-acid polypeptide reads, in one-letter code: Protein nucleotidyltransferase YdiU (483 aa).

8 residues coordinate ATP: glycine 87, glycine 89, arginine 90, lysine 110, aspartate 122, glycine 123, arginine 173, and arginine 180. Catalysis depends on aspartate 249, which acts as the Proton acceptor. Mg(2+) is bound by residues asparagine 250 and aspartate 259. Aspartate 259 serves as a coordination point for ATP.

Belongs to the SELO family. Mg(2+) is required as a cofactor. Mn(2+) serves as cofactor.

The enzyme catalyses L-seryl-[protein] + ATP = 3-O-(5'-adenylyl)-L-seryl-[protein] + diphosphate. It catalyses the reaction L-threonyl-[protein] + ATP = 3-O-(5'-adenylyl)-L-threonyl-[protein] + diphosphate. It carries out the reaction L-tyrosyl-[protein] + ATP = O-(5'-adenylyl)-L-tyrosyl-[protein] + diphosphate. The catalysed reaction is L-histidyl-[protein] + UTP = N(tele)-(5'-uridylyl)-L-histidyl-[protein] + diphosphate. The enzyme catalyses L-seryl-[protein] + UTP = O-(5'-uridylyl)-L-seryl-[protein] + diphosphate. It catalyses the reaction L-tyrosyl-[protein] + UTP = O-(5'-uridylyl)-L-tyrosyl-[protein] + diphosphate. Its function is as follows. Nucleotidyltransferase involved in the post-translational modification of proteins. It can catalyze the addition of adenosine monophosphate (AMP) or uridine monophosphate (UMP) to a protein, resulting in modifications known as AMPylation and UMPylation. The chain is Protein nucleotidyltransferase YdiU from Pectobacterium atrosepticum (strain SCRI 1043 / ATCC BAA-672) (Erwinia carotovora subsp. atroseptica).